Reading from the N-terminus, the 160-residue chain is Cytochrome b6-f complex subunit 4 (160 aa).

3 helical membrane-spanning segments follow: residues 36–56, 95–115, and 131–151; these read LLYL…GLAV, LLGV…PFIE, and LVFI…CLPI.

It belongs to the cytochrome b family. PetD subfamily. The 4 large subunits of the cytochrome b6-f complex are cytochrome b6, subunit IV (17 kDa polypeptide, petD), cytochrome f and the Rieske protein, while the 4 small subunits are petG, petL, petM and petN. The complex functions as a dimer.

It is found in the plastid. The protein localises to the chloroplast thylakoid membrane. Its function is as follows. Component of the cytochrome b6-f complex, which mediates electron transfer between photosystem II (PSII) and photosystem I (PSI), cyclic electron flow around PSI, and state transitions. The sequence is that of Cytochrome b6-f complex subunit 4 from Thalassiosira pseudonana (Marine diatom).